A 247-amino-acid chain; its full sequence is Adenosylcobinamide-GDP ribazoletransferase (247 aa).

Transmembrane regions (helical) follow at residues 34–54, 59–79, 113–133, 138–158, and 194–214; these read IITFPLIGLLLGAISGLVFMA, FGVPLAALFSVLVLALMTGGF, GGLALIFVVLAKILVLSELAL, ILASLAAACAVSRGTAALLMY, and VLLPGMHGVAAMVVTMVAIFI.

This sequence belongs to the CobS family. Requires Mg(2+) as cofactor.

It is found in the cell inner membrane. The catalysed reaction is alpha-ribazole + adenosylcob(III)inamide-GDP = adenosylcob(III)alamin + GMP + H(+). It carries out the reaction alpha-ribazole 5'-phosphate + adenosylcob(III)inamide-GDP = adenosylcob(III)alamin 5'-phosphate + GMP + H(+). It participates in cofactor biosynthesis; adenosylcobalamin biosynthesis; adenosylcobalamin from cob(II)yrinate a,c-diamide: step 7/7. Functionally, joins adenosylcobinamide-GDP and alpha-ribazole to generate adenosylcobalamin (Ado-cobalamin). Also synthesizes adenosylcobalamin 5'-phosphate from adenosylcobinamide-GDP and alpha-ribazole 5'-phosphate. This Escherichia coli O17:K52:H18 (strain UMN026 / ExPEC) protein is Adenosylcobinamide-GDP ribazoletransferase.